The following is a 209-amino-acid chain: Outer-membrane lipoprotein carrier protein (209 aa).

An N-terminal signal peptide occupies residues 1 to 22; sequence MKKLLLTLAMVPAVLFSPTAWG.

This sequence belongs to the LolA family. Monomer.

It localises to the periplasm. Functionally, participates in the translocation of lipoproteins from the inner membrane to the outer membrane. Only forms a complex with a lipoprotein if the residue after the N-terminal Cys is not an aspartate (The Asp acts as a targeting signal to indicate that the lipoprotein should stay in the inner membrane). The chain is Outer-membrane lipoprotein carrier protein from Alcanivorax borkumensis (strain ATCC 700651 / DSM 11573 / NCIMB 13689 / SK2).